Here is a 211-residue protein sequence, read N- to C-terminus: uncharacterized protein (211 aa).

Disordered regions lie at residues 1–73 and 96–123; these read MLRR…SKLK and TNAA…ASLS. 2 stretches are compositionally biased toward polar residues: residues 26-35 and 53-62; these read SKSSLISLTS and APSQFLSPTN. A compositionally biased stretch (low complexity) spans 63 to 73; the sequence is KRSTSSQSKLK. Serine 182 carries the post-translational modification Phosphoserine. At threonine 184 the chain carries Phosphothreonine. Serine 186 carries the post-translational modification Phosphoserine.

This is an uncharacterized protein from Saccharomyces cerevisiae (strain ATCC 204508 / S288c) (Baker's yeast).